A 288-amino-acid polypeptide reads, in one-letter code: Ankyrin repeat and SOCS box protein 8 (288 aa).

At serine 17 the chain carries Phosphoserine. 4 ANK repeats span residues 52 to 81 (GTLK…EVNA), 85 to 113 (YNRT…NPNA), 117 to 146 (NRDT…SVNA), and 150 to 179 (NNDT…EVRV). Residues 235–288 (QLCEKLTVLCSAPGTLKTLSRYAVRRSLGLQYLPDAVKGLPLPASLKEYLLLIE) enclose the SOCS box domain.

Belongs to the ankyrin SOCS box (ASB) family. In terms of assembly, interacts with TBK1; this interaction promotes TBK1 proteasomal degradation. Post-translationally, phosphorylated by TBK1.

Its subcellular location is the cytoplasm. Its pathway is protein modification; protein ubiquitination. May be a substrate-recognition component of a SCF-like ECS (Elongin-Cullin-SOCS-box protein) E3 ubiquitin-protein ligase complex which mediates the ubiquitination and subsequent proteasomal degradation of target proteins. Inhibits IFN-beta production through the IRF3 signaling pathway by targeting TBK1 via 'Lys-48'-linked ubiquitination, leading to its proteasomal degradation. This chain is Ankyrin repeat and SOCS box protein 8 (ASB8), found in Bos taurus (Bovine).